A 356-amino-acid polypeptide reads, in one-letter code: Protein RecA (356 aa).

Position 68–75 (68–75 (GQESSGKT)) interacts with ATP.

The protein belongs to the RecA family.

Its subcellular location is the cytoplasm. In terms of biological role, can catalyze the hydrolysis of ATP in the presence of single-stranded DNA, the ATP-dependent uptake of single-stranded DNA by duplex DNA, and the ATP-dependent hybridization of homologous single-stranded DNAs. It interacts with LexA causing its activation and leading to its autocatalytic cleavage. The chain is Protein RecA from Thermotoga sp. (strain RQ2).